Reading from the N-terminus, the 504-residue chain is Peroxisome proliferator-activated receptor gamma (504 aa).

Phosphoserine; by MAPK is present on Ser111. The segment at residues 135–209 is a DNA-binding region (nuclear receptor); sequence AIECRVCGDK…VGMSHNAIRF (75 aa). NR C4-type zinc fingers lie at residues 138 to 158 and 175 to 197; these read CRVC…CEGC and CDLN…FQKC. An interaction with FAM120B region spans residues 204-279; the sequence is HNAIRFGRMP…DKSPFVIYDM (76 aa). The NR LBD domain occupies 237 to 502; sequence DLRALAKHLY…HPLLQEIYKD (266 aa). Lys251 participates in a covalent cross-link: Glycyl lysine isopeptide (Lys-Gly) (interchain with G-Cter in ubiquitin). The 9aaTAD motif lies at 494 to 502; it reads PLLQEIYKD.

The protein belongs to the nuclear hormone receptor family. NR1 subfamily. As to quaternary structure, interacts with FOXO1 (acetylated form). Heterodimer with other nuclear receptors, such as RXRA. The heterodimer with the retinoic acid receptor RXRA is called adipocyte-specific transcription factor ARF6. Interacts with NCOA6 coactivator, leading to a strong increase in transcription of target genes. Interacts with coactivator PPARBP, leading to a mild increase in transcription of target genes. Interacts with NOCA7 in a ligand-inducible manner. Interacts with NCOA1 and NCOA2 LXXLL motifs. Interacts with ASXL1, ASXL2, DNTTIP2, FAM120B, MAP2K1/MEK1, NR0B2, PDPK1, PRDM16, PRMT2 and TGFB1I1. Interacts (when activated by agonist) with PPP5C. Interacts with HELZ2 and THRAP3; the interaction stimulates the transcriptional activity of PPARG. Interacts with PER2, the interaction is ligand dependent and blocks PPARG recruitment to target promoters. Interacts with NOCT. Interacts with ACTN4. Interacts (when in the liganded conformation) with GPS2. Interacts with CRY1 and CRY2 in a ligand-dependent manner. In the absence of hormonal ligand, interacts with TACC1. In macrophages, interacts with PAQR3 and STUB1; the interactions promote PPARG poylubiquitination and STUB1-mediated degradation. In terms of processing, phosphorylated at basal conditions and dephosphorylated when treated with the ligand. May be dephosphorylated by PPP5C. The phosphorylated form may be inactive and dephosphorylation induces adipogenic activity. Ubiquitinated by E3 ubiquitin-protein ligase complex containing FBXO9; leading to proteasomal degradation. Ubiquitinated at Lys-251 by TRIM55 leading to proteasomal degradation. Ubiquitinated by E3 ubiquitin-protein ligase STUB1/CHIP; leading to proteasomal degradation. As to expression, highest expression in adipose tissue and lower in spleen. Very low levels in kidney, intestine, lung and muscle.

The protein localises to the nucleus. The protein resides in the cytoplasm. PDPK1 activates its transcriptional activity independently of its kinase activity. In terms of biological role, nuclear receptor that binds peroxisome proliferators such as hypolipidemic drugs and fatty acids. Once activated by a ligand, the nuclear receptor binds to DNA specific PPAR response elements (PPRE) and modulates the transcription of its target genes, such as acyl-CoA oxidase. It therefore controls the peroxisomal beta-oxidation pathway of fatty acids. Key regulator of adipocyte differentiation and glucose homeostasis. ARF6 acts as a key regulator of the tissue-specific adipocyte P2 (aP2) enhancer. Acts as a critical regulator of gut homeostasis by suppressing NF-kappa-B-mediated pro-inflammatory responses. Plays a role in the regulation of cardiovascular circadian rhythms by regulating the transcription of BMAL1 in the blood vessels. The protein is Peroxisome proliferator-activated receptor gamma (PPARG) of Sus scrofa (Pig).